We begin with the raw amino-acid sequence, 374 residues long: Queuine tRNA-ribosyltransferase (374 aa).

The active-site Proton acceptor is the Asp-90. Substrate-binding positions include 90–94 (DSGGF), Asp-144, Gln-193, and Gly-220. Residues 251 to 257 (GVGTPED) are RNA binding. Asp-270 functions as the Nucleophile in the catalytic mechanism. The tract at residues 275-279 (TRNAR) is RNA binding; important for wobble base 34 recognition. Zn(2+) is bound by residues Cys-308, Cys-310, Cys-313, and His-339.

Belongs to the queuine tRNA-ribosyltransferase family. In terms of assembly, homodimer. Within each dimer, one monomer is responsible for RNA recognition and catalysis, while the other monomer binds to the replacement base PreQ1. Requires Zn(2+) as cofactor.

It carries out the reaction 7-aminomethyl-7-carbaguanine + guanosine(34) in tRNA = 7-aminomethyl-7-carbaguanosine(34) in tRNA + guanine. It functions in the pathway tRNA modification; tRNA-queuosine biosynthesis. In terms of biological role, catalyzes the base-exchange of a guanine (G) residue with the queuine precursor 7-aminomethyl-7-deazaguanine (PreQ1) at position 34 (anticodon wobble position) in tRNAs with GU(N) anticodons (tRNA-Asp, -Asn, -His and -Tyr). Catalysis occurs through a double-displacement mechanism. The nucleophile active site attacks the C1' of nucleotide 34 to detach the guanine base from the RNA, forming a covalent enzyme-RNA intermediate. The proton acceptor active site deprotonates the incoming PreQ1, allowing a nucleophilic attack on the C1' of the ribose to form the product. After dissociation, two additional enzymatic reactions on the tRNA convert PreQ1 to queuine (Q), resulting in the hypermodified nucleoside queuosine (7-(((4,5-cis-dihydroxy-2-cyclopenten-1-yl)amino)methyl)-7-deazaguanosine). The protein is Queuine tRNA-ribosyltransferase of Campylobacter fetus subsp. fetus (strain 82-40).